The chain runs to 211 residues: MFSTFLTALRTCVVTMVLTGLLYPLAVTGLAQLLFPGEANGSWVKDGRGRVVGSALIGQGFTRAGYFHPRPSAAGAGYDGAASSGSNLGPTSLKLKERAAAELERLRRENPDAAGPVPAELVTTSASGLDPHLSPETARWQAARVARARGVALERVLDVVDARVEGRTFGVLGEPRVNVLLLNLALDRRFGPLPDAAPGVGGRASPGQGAP.

A helical membrane pass occupies residues 13 to 35 (VVTMVLTGLLYPLAVTGLAQLLF).

This sequence belongs to the KdpC family. As to quaternary structure, the system is composed of three essential subunits: KdpA, KdpB and KdpC.

It is found in the cell membrane. Functionally, part of the high-affinity ATP-driven potassium transport (or Kdp) system, which catalyzes the hydrolysis of ATP coupled with the electrogenic transport of potassium into the cytoplasm. This subunit acts as a catalytic chaperone that increases the ATP-binding affinity of the ATP-hydrolyzing subunit KdpB by the formation of a transient KdpB/KdpC/ATP ternary complex. This chain is Potassium-transporting ATPase KdpC subunit, found in Myxococcus xanthus.